The primary structure comprises 316 residues: Olfactory receptor 5AP2 (316 aa).

At 1-34 (MRLMKEVRGRNQTEVTEFLLLGLSDNPDLQGVLF) the chain is on the extracellular side. Asn11 is a glycosylation site (N-linked (GlcNAc...) asparagine). Residues 35-55 (ALFLLIYMANMVGNLGMIVLI) traverse the membrane as a helical segment. Position 56 (Lys56) is a topological domain, cytoplasmic. Residues 57 to 77 (IDLCLHTPMYFFLSSLSFVDA) traverse the membrane as a helical segment. Topologically, residues 78 to 104 (SYSSSVTPKMLVNLMAENKAISFHGCA) are extracellular. Residues Cys103 and Cys195 are joined by a disulfide bond. The helical transmembrane segment at 105–125 (AQFYFFGSFLGTECFLLAMMA) threads the bilayer. Over 126–135 (YDRYAAIWNP) the chain is Cytoplasmic. The helical transmembrane segment at 136–156 (LLYPVLVSGRICFLLIATSFL) threads the bilayer. At 157–210 (AGCGNAAIHTGMTFRLSFCGSNRINHFYCDTPPLLKLSCSDTHFNGIVIMAFSS) the chain is on the extracellular side. Residues 211–231 (FIVISCVMIVLISYLCIFIAV) traverse the membrane as a helical segment. The Cytoplasmic portion of the chain corresponds to 232–245 (LKMPSLEGRHKAFS). The chain crosses the membrane as a helical span at residues 246–266 (TCASYLMAVTIFFGTILFMYL). The Extracellular segment spans residues 267-278 (RPTSSYSMEQDK). A helical membrane pass occupies residues 279 to 299 (VVSVFYTVIIPVLNPLIYSLK). Topologically, residues 300–316 (NKDVKKALKKILWKHIL) are cytoplasmic.

Belongs to the G-protein coupled receptor 1 family.

It is found in the cell membrane. In terms of biological role, odorant receptor. This chain is Olfactory receptor 5AP2, found in Homo sapiens (Human).